The chain runs to 920 residues: DNA ligase (920 aa).

NAD(+) contacts are provided by residues 90–94 (DAAYD), 139–140 (SL), and Glu173. Catalysis depends on Lys175, which acts as the N6-AMP-lysine intermediate. Arg196, Glu235, Lys360, and Lys384 together coordinate NAD(+). Zn(2+)-binding residues include Cys481, Cys484, Cys500, and Cys506. The segment at 659 to 691 (RAQGEAAIESAETQGDTASETTGAPTGAEAPLG) is disordered. Polar residues predominate over residues 669 to 682 (AETQGDTASETTGA). In terms of domain architecture, BRCT spans 839–920 (SLPQTLAGKT…FAQLLATGTI (82 aa)).

It belongs to the NAD-dependent DNA ligase family. LigA subfamily. Requires Mg(2+) as cofactor. It depends on Mn(2+) as a cofactor.

It catalyses the reaction NAD(+) + (deoxyribonucleotide)n-3'-hydroxyl + 5'-phospho-(deoxyribonucleotide)m = (deoxyribonucleotide)n+m + AMP + beta-nicotinamide D-nucleotide.. In terms of biological role, DNA ligase that catalyzes the formation of phosphodiester linkages between 5'-phosphoryl and 3'-hydroxyl groups in double-stranded DNA using NAD as a coenzyme and as the energy source for the reaction. It is essential for DNA replication and repair of damaged DNA. This Bifidobacterium longum (strain NCC 2705) protein is DNA ligase.